The chain runs to 358 residues: Uroporphyrinogen decarboxylase (358 aa).

Substrate contacts are provided by residues 27 to 31, Asp-77, Tyr-154, Ser-209, and His-327; that span reads RQAGR.

It belongs to the uroporphyrinogen decarboxylase family. In terms of assembly, homodimer.

It is found in the cytoplasm. The enzyme catalyses uroporphyrinogen III + 4 H(+) = coproporphyrinogen III + 4 CO2. It functions in the pathway porphyrin-containing compound metabolism; protoporphyrin-IX biosynthesis; coproporphyrinogen-III from 5-aminolevulinate: step 4/4. Its function is as follows. Catalyzes the decarboxylation of four acetate groups of uroporphyrinogen-III to yield coproporphyrinogen-III. The polypeptide is Uroporphyrinogen decarboxylase (Azoarcus sp. (strain BH72)).